Consider the following 513-residue polypeptide: MEPAGPAPGRLGPLLLCLLLSASCFCTGATGKELKVTQPEKSVSVAAGDSTVLNCTLTSLLPVGPIRWYRGVGPSRLLIYSFAGEYVPRIRNVSDTTKRNNMDFSIRISNVTPADAGIYYCVKFQKGSSEPDTEIQSGGGTEVYVLAKPSPPEVSGPADRGIPDQKVNFTCKSHGFSPRNITLKWFKDGQELHPLETTVNPSGKNVSYNISSTVRVVLNSMDVNSKVICEVAHITLDRSPLRGIANLSNFIRVSPTVKVTQQSPTSMNQVNLTCRAERFYPEDLQLIWLENGNVSRNDTPKNLTKNTDGTYNYTSLFLVNSSAHREDVVFTCQVKHDQQPAITRNHTVLGFAHSSDQGSMQTFPDNNATHNWNVFIGVGVACALLVVLLMAALYLLRIKQKKAKGSTSSTRLHEPEKNAREITQVQSLIQDTNDINDITYADLNLPKEKKPAPRAPEPNNHTEYASIETGKVPRPEDTLTYADLDMVHLSRAQPAPKPEPSFSEYASVQVQRK.

The signal sequence occupies residues 1–31 (MEPAGPAPGRLGPLLLCLLLSASCFCTGATG). Residues 32-137 (KELKVTQPEK…SSEPDTEIQS (106 aa)) enclose the Ig-like V-type domain. Residues 32-373 (KELKVTQPEK…PDNNATHNWN (342 aa)) are Extracellular-facing. N-linked (GlcNAc...) asparagine glycans are attached at residues N54, N92, N168, N180, N205, N209, N246, N271, N293, N302, N312, N320, N345, and N367. A disulfide bridge links C55 with C121. Ig-like C1-type domains lie at 149–248 (PSPP…ANLS) and 255–343 (PTVK…PAIT). C171 and C229 are joined by a disulfide. C274 and C332 are disulfide-bonded. The chain crosses the membrane as a helical span at residues 374-394 (VFIGVGVACALLVVLLMAALY). Topologically, residues 395–511 (LLRIKQKKAK…FSEYASVQVQ (117 aa)) are cytoplasmic. Residue Y440 is modified to Phosphotyrosine; by Tyr-kinases. Residues 440-443 (YADL) carry the SH2-binding motif. Residues 444–513 (NLPKEKKPAP…EYASVQVQRK (70 aa)) form a disordered region. The SH3-binding motif lies at 450-455 (KPAPRA). Phosphotyrosine; by Tyr-kinases is present on residues Y464, Y481, and Y505. 3 consecutive short sequence motifs (SH2-binding) follow at residues 464-467 (YASI), 481-484 (YADL), and 505-508 (YASV). The segment covering 504–513 (EYASVQVQRK) has biased composition (polar residues).

In terms of assembly, binds PTPN11 when tyrosine-phosphorylated, except in macrophages, where it primarily binds PTPN6. Binds GRB2 vitro. Binds FGR. Binds JAK2 irrespective of its phosphorylation status and forms a stable complex. Binds SCAP1 and/or SCAP2. The resulting complex recruits FYB1. Binds PTK2B. Interacts with TRIM2. Post-translationally, N-glycosylated. In terms of processing, phosphorylated on tyrosine residues. As to expression, highly expressed in cerebral cortex, brain, spinal cord, cerebellum and spleen, and at much lower levels in kidney, thymus, heart, lung and liver. Within the cerebellum, highly expressed throughout the molecular layer, and in synaptic glomeruli in the granule cell layer. Detected in neurons of the hippocampus and dentate gyrus, and in olfactory bulb. Not detected in Purkinje cells. Highly expressed in the plexiform layers, optic fiber layer and the outer segments of the photoreceptor layer in the retina. Highly expressed in macrophages. Isoform 3 is detected at very low levels in all tissues tested.

It is found in the membrane. Its function is as follows. Immunoglobulin-like cell surface receptor for CD47. Acts as a docking protein and induces translocation of PTPN6, PTPN11 and other binding partners from the cytosol to the plasma membrane. Supports adhesion of cerebellar neurons, neurite outgrowth and glial cell attachment. May play a key role in intracellular signaling during synaptogenesis and in synaptic function. Involved in the negative regulation of receptor tyrosine kinase-coupled cellular responses induced by cell adhesion, growth factors or insulin. Mediates negative regulation of phagocytosis, mast cell activation and dendritic cell activation. CD47 binding prevents maturation of immature dendritic cells and inhibits cytokine production by mature dendritic cells. Plays a role in antiviral immunity and limits new world arenavirus infection by decreasing virus internalization. Receptor for THBS1. Interaction with THBS1 stimulates phosphorylation of SIRPA. In response to THBS1, involved in ROS signaling in non-phagocytic cells, stimulating NADPH oxidase-derived ROS production. This chain is Tyrosine-protein phosphatase non-receptor type substrate 1 (Sirpa), found in Mus musculus (Mouse).